The following is a 651-amino-acid chain: Tudor domain-containing protein 3 (651 aa).

The interval 147-189 (TKTFGGGGGGVRSHLNIGAGGHRNREVSQKEKASKSESKNEGV) is disordered. The segment covering 169-189 (RNREVSQKEKASKSESKNEGV) has biased composition (basic and acidic residues). Positions 193–233 (LVDEKALKHITEMGFSKEASRQALMDNANNLEAALNVLLNS) constitute a UBA domain. Disordered regions lie at residues 234–272 (SKQKPVVGPPPRGRGKGRGRVRSEDEEDLGNARPSAPST), 306–371 (TEQN…DVWA), and 384–459 (YDRT…RKSR). Phosphoserine is present on Ser256. Residues 321–338 (PRNDPRQPRNEKPPRFQR) are compositionally biased toward basic and acidic residues. Over residues 339–352 (DTPNLKSALENSVL) the composition is skewed to polar residues. Ser345 bears the Phosphoserine mark. Lys470 is covalently cross-linked (Glycyl lysine isopeptide (Lys-Gly) (interchain with G-Cter in SUMO2)). The Tudor domain maps to 555–615 (MWKPGDECFA…KPVQTEAWEE (61 aa)). Positions 624–633 (EFRRGGDGQP) are enriched in basic and acidic residues. The segment at 624-651 (EFRRGGDGQPRRSTRPTQQFYQPPRARN) is disordered. Positions 631–651 (GQPRRSTRPTQQFYQPPRARN) are EBM motif; may mediate interaction with the EJC.

In terms of assembly, component of mRNA stress granules. Interacts with FMR1, FXR1, FXR2, EWSR1, FUS, SERBP1, EEF1A1 and DDX3X or DDX3Y, and with the small nuclear ribonucleoprotein-associated proteins SNRPB and SNRPN. Interacts with 'Lys-48'-linked tetra-ubiquitin, but not with monoubiquitin or 'Lys-63'-linked ubiquitin chains. May interact with the exon junction complex (EJC) composed at least of CASC3, EIF4A3, MAGOH and RBM8A. Interacts with POLR2A (via the C-terminal domain (CTD)).

Its subcellular location is the cytoplasm. The protein localises to the nucleus. Functionally, scaffolding protein that specifically recognizes and binds dimethylarginine-containing proteins. Plays a role in the regulation of translation of target mRNAs by binding Arg/Gly-rich motifs (GAR) in dimethylarginine-containing proteins. In nucleus, acts as a coactivator: recognizes and binds asymmetric dimethylation on the core histone tails associated with transcriptional activation (H3R17me2a and H4R3me2a) and recruits proteins at these arginine-methylated loci. In cytoplasm, acts as an antiviral factor that participates in the assembly of stress granules together with G3BP1. The sequence is that of Tudor domain-containing protein 3 (Tdrd3) from Rattus norvegicus (Rat).